The chain runs to 170 residues: Bifunctional protein PyrR (170 aa).

A PRPP-binding motif is present at residues 90–102; it reads LVLIDDVLMSGRT.

This sequence belongs to the purine/pyrimidine phosphoribosyltransferase family. PyrR subfamily.

The enzyme catalyses UMP + diphosphate = 5-phospho-alpha-D-ribose 1-diphosphate + uracil. Regulates the transcription of the pyrimidine nucleotide (pyr) operon in response to exogenous pyrimidines. In terms of biological role, also displays a weak uracil phosphoribosyltransferase activity which is not physiologically significant. The sequence is that of Bifunctional protein PyrR from Pseudomonas savastanoi pv. phaseolicola (strain 1448A / Race 6) (Pseudomonas syringae pv. phaseolicola (strain 1448A / Race 6)).